A 160-amino-acid polypeptide reads, in one-letter code: uncharacterized protein (160 aa).

Residues 7 to 151 (LLINYKTLEE…NPLIWHPDMD (145 aa)) form the N-acetyltransferase domain.

This is an uncharacterized protein from Bacillus subtilis (strain 168).